The sequence spans 663 residues: Probable potassium transport system protein Kup (663 aa).

The interval 1 to 23 (MSDNPSSRAGPEVVPTPPPSPAA) is disordered. Helical transmembrane passes span 81–101 (PANV…VVTF), 137–157 (LLII…VITP), 173–193 (PALE…LFFI), 201–221 (VGAV…ILGV), 224–244 (ILFD…AFFA), 248–268 (WHGF…EALY), 283–303 (WLLV…AILL), 315–335 (LLVP…AAIV), 373–393 (IYVP…VLGF), 399–419 (LAAA…LLFH), 433–453 (AWPL…ANIV), and 455–475 (VEEG…LLST).

This sequence belongs to the HAK/KUP transporter (TC 2.A.72) family.

The protein resides in the cell inner membrane. It catalyses the reaction K(+)(in) + H(+)(in) = K(+)(out) + H(+)(out). Its function is as follows. Transport of potassium into the cell. Likely operates as a K(+):H(+) symporter. In Anaeromyxobacter sp. (strain Fw109-5), this protein is Probable potassium transport system protein Kup.